Consider the following 376-residue polypeptide: Glutamate 5-kinase (376 aa).

Residue Lys15 participates in ATP binding. Positions 55, 141, and 153 each coordinate substrate. Residues 173 to 174 (SD) and 215 to 221 (TGGMQTK) contribute to the ATP site. The region spanning 280-361 (AGRLTVDAGA…HAIAEVLDEA (82 aa)) is the PUA domain.

It belongs to the glutamate 5-kinase family.

It is found in the cytoplasm. It catalyses the reaction L-glutamate + ATP = L-glutamyl 5-phosphate + ADP. Its pathway is amino-acid biosynthesis; L-proline biosynthesis; L-glutamate 5-semialdehyde from L-glutamate: step 1/2. In terms of biological role, catalyzes the transfer of a phosphate group to glutamate to form L-glutamate 5-phosphate. The chain is Glutamate 5-kinase from Salinibacter ruber (strain DSM 13855 / M31).